The following is an 810-amino-acid chain: Soluble starch synthase 2-3, chloroplastic/amyloplastic (810 aa).

The transit peptide at 1–16 (MSSAVVASSTTFLVAL) directs the protein to the chloroplast. 2 disordered regions span residues 43–265 (GRAG…PIPA) and 281–313 (EPDA…SGPL). Over residues 63–83 (RDAGVVRRADDGENEAAVERA) the composition is skewed to basic and acidic residues. Residues 84–93 (GEDDEEEEEF) show a composition bias toward acidic residues. Positions 102 to 116 (RSRRGGVGKVLKRRG) are enriched in basic residues. The span at 129–148 (DAARVRGAAAPAPAPTQDAA) shows a compositional bias: low complexity. Residues 281–310 (EPDAAEDGDDDDDWADSDASDSEIDQDDDS) are compositionally biased toward acidic residues. K333 is a binding site for ADP-alpha-D-glucose.

This sequence belongs to the glycosyltransferase 1 family. Bacterial/plant glycogen synthase subfamily. In terms of tissue distribution, expressed most exclusively in endosperm.

It localises to the plastid. Its subcellular location is the amyloplast. It is found in the chloroplast. It catalyses the reaction [(1-&gt;4)-alpha-D-glucosyl](n) + ADP-alpha-D-glucose = [(1-&gt;4)-alpha-D-glucosyl](n+1) + ADP + H(+). Its pathway is glycan biosynthesis; starch biosynthesis. Functionally, plays an important role during endosperm starch synthesis. Determines the type of amylopectin structure of starch grain. Synthesizes long B1 amylopectin chains by elongating short A and B1 chains, independently of the other soluble starch synthases. Barely active in japonica subspecies. The chain is Soluble starch synthase 2-3, chloroplastic/amyloplastic (SSII-3) from Oryza sativa subsp. indica (Rice).